The following is a 291-amino-acid chain: MHNLIFAILCSVAVSVLLKIARKKNIIIEQAIAFNYITAITFSYFLLKPDFKGLEFTDYIAQSENSPIFLALGLLLPSVFIIMSKAVEFAGIVRSDAAQRLSLFLPILAAFLIFHETLSQSKIIGVVLAFIGLFCLLTKPTQGQSAVNFKGVLGLIGVWFGYGIIDILFKQVAKSGGAFPATLFISFSLAACVMFIYLFLKRVQWTSSSVIGGIVLGVLNFFNILFYIKAHQSFAGNPTLVFAGMNIGVICLGTITGALVFKERISKLNWLGIIFSLSAIFCLYYLDKIIA.

A run of 10 helical transmembrane segments spans residues 1 to 21 (MHNLIFAILCSVAVSVLLKIA), 26 to 46 (IIIEQAIAFNYITAITFSYFL), 67 to 87 (PIFLALGLLLPSVFIIMSKAV), 95 to 115 (SDAAQRLSLFLPILAAFLIFH), 117 to 137 (TLSQSKIIGVVLAFIGLFCLL), 149 to 169 (FKGVLGLIGVWFGYGIIDILF), 179 to 199 (FPATLFISFSLAACVMFIYLF), 208 to 228 (SSVIGGIVLGVLNFFNILFYI), 241 to 261 (VFAGMNIGVICLGTITGALVF), and 270 to 290 (WLGIIFSLSAIFCLYYLDKII). One can recognise an EamA domain in the interval 107–138 (ILAAFLIFHETLSQSKIIGVVLAFIGLFCLLT).

It is found in the cell membrane. This is an uncharacterized protein from Haemophilus influenzae (strain ATCC 51907 / DSM 11121 / KW20 / Rd).